The following is a 188-amino-acid chain: Large ribosomal subunit protein uL6 (188 aa).

Belongs to the universal ribosomal protein uL6 family.

This chain is Large ribosomal subunit protein uL6 (RPL9), found in Tetrahymena thermophila (strain SB210).